The sequence spans 334 residues: Probable 2-ketogluconate reductase (334 aa).

Residues 164 to 165, 244 to 246, and aspartate 270 each bind NAD(+); these read RI and AGR. The active site involves arginine 246. Glutamate 275 is an active-site residue. Histidine 294 functions as the Proton donor in the catalytic mechanism. 294 to 297 is a binding site for NAD(+); that stretch reads HIGT.

This sequence belongs to the D-isomer specific 2-hydroxyacid dehydrogenase family.

Its subcellular location is the cytoplasm. The catalysed reaction is D-gluconate + NADP(+) = 2-dehydro-D-gluconate + NADPH + H(+). Catalyzes the NADPH-dependent reduction of 2,5-diketo-D-gluconate (25DKG) to 5-keto-D-gluconate (5KDG), 2-keto-D-gluconate (2KDG) to D-gluconate, and 2-keto-L-gulonate (2KLG) to L-idonate (IA). The chain is Probable 2-ketogluconate reductase (tkrA) from Dictyostelium discoideum (Social amoeba).